The chain runs to 407 residues: Histidine--tRNA ligase (407 aa).

It belongs to the class-II aminoacyl-tRNA synthetase family. As to quaternary structure, homodimer.

The protein resides in the cytoplasm. The enzyme catalyses tRNA(His) + L-histidine + ATP = L-histidyl-tRNA(His) + AMP + diphosphate + H(+). The protein is Histidine--tRNA ligase of Wolbachia pipientis subsp. Culex pipiens (strain wPip).